The following is a 134-amino-acid chain: Large ribosomal subunit protein uL16c (134 aa).

Positions 1-17 (MLSPKRTRFRKQHRGRM) are enriched in basic residues. Residues 1-22 (MLSPKRTRFRKQHRGRMKGISS) are disordered.

This sequence belongs to the universal ribosomal protein uL16 family. Part of the 50S ribosomal subunit.

The protein localises to the plastid. The protein resides in the chloroplast. The sequence is that of Large ribosomal subunit protein uL16c from Solanum tuberosum (Potato).